The following is a 92-amino-acid chain: MKLCVTVLSLLVLVAAFCSLALSAPMGSDPPTACCFSYTARKLPRNFVVDYYETSSLCSQPAVVFQTKRGKQVCADPSESWVQEYVYDLELN.

The first 23 residues, methionine 1–serine 23, serve as a signal peptide directing secretion. Cystine bridges form between cysteine 34/cysteine 58 and cysteine 35/cysteine 74.

Belongs to the intercrine beta (chemokine CC) family. In terms of assembly, interacts with CCR5. Detected in B-cells.

The protein localises to the secreted. In terms of biological role, chemokine that induces chemotaxis of cells expressing CCR5 or CCR1. Inhibits HIV replication in peripheral blood monocytes that express CCR5. The chain is C-C motif chemokine 4-like (CCL4L1) from Homo sapiens (Human).